Consider the following 859-residue polypeptide: DNA mismatch repair protein MutS (859 aa).

612–619 (GPNMGGKS) is an ATP binding site. The tract at residues 797 to 822 (SKPLAPSATPPSSYAAPSPAAAPAQA) is disordered.

This sequence belongs to the DNA mismatch repair MutS family.

In terms of biological role, this protein is involved in the repair of mismatches in DNA. It is possible that it carries out the mismatch recognition step. This protein has a weak ATPase activity. This chain is DNA mismatch repair protein MutS, found in Alcanivorax borkumensis (strain ATCC 700651 / DSM 11573 / NCIMB 13689 / SK2).